The sequence spans 2145 residues: U5 small nuclear ribonucleoprotein 200 kDa helicase (2145 aa).

2 disordered regions span residues 54–82 (GDRAIKGKAPVQDQKKKRKKKDDEKAQQF) and 202–243 (DSDE…GDGH). Residues 220–231 (SEEESEEEEGVD) show a composition bias toward acidic residues. The 184-residue stretch at 484 to 667 (DSALRSKEHL…FLRVKPEHLH (184 aa)) folds into the Helicase ATP-binding 1 domain. 497 to 504 (APTGAGKT) lines the ATP pocket. The short motif at 609-612 (DEIH) is the DEAH box element. In terms of domain architecture, Helicase C-terminal spans 677–894 (PLEQQYIGVT…QMVSRLTDML (218 aa)). The SEC63 1 domain occupies 975–1278 (TELGRIASHF…IGAETVLPIS (304 aa)). Residues 1331–1506 (RTVFESNENV…WLGCSASATF (176 aa)) form the Helicase ATP-binding 2 domain. An ATP-binding site is contributed by 1344 to 1351 (APNGSGKT). A DEAH box motif is present at residues 1448-1451 (DDLH). Residues 1812–2124 (LNLGMIASYY…YLGADQEFDV (313 aa)) form the SEC63 2 domain.

This sequence belongs to the helicase family. SKI2 subfamily.

The protein localises to the nucleus. It carries out the reaction ATP + H2O = ADP + phosphate + H(+). Its function is as follows. Catalyzes the ATP-dependent unwinding of U4/U6 RNA duplices, an essential step in the assembly of a catalytically active spliceosome. Plays a role in pre-mRNA splicing. The sequence is that of U5 small nuclear ribonucleoprotein 200 kDa helicase from Caenorhabditis elegans.